A 406-amino-acid polypeptide reads, in one-letter code: Tyrosine--tRNA ligase (406 aa).

The 'HIGH' region signature appears at 48 to 57 (PSRPDLHLGH). The 'KMSKS' region motif lies at 232–236 (KMSKS). Lys-235 lines the ATP pocket. The region spanning 339-401 (MPVVELLMAL…GKRKFFKVAR (63 aa)) is the S4 RNA-binding domain.

This sequence belongs to the class-I aminoacyl-tRNA synthetase family. TyrS type 2 subfamily. Homodimer.

The protein localises to the cytoplasm. The catalysed reaction is tRNA(Tyr) + L-tyrosine + ATP = L-tyrosyl-tRNA(Tyr) + AMP + diphosphate + H(+). Catalyzes the attachment of tyrosine to tRNA(Tyr) in a two-step reaction: tyrosine is first activated by ATP to form Tyr-AMP and then transferred to the acceptor end of tRNA(Tyr). The polypeptide is Tyrosine--tRNA ligase (Chlorobaculum tepidum (strain ATCC 49652 / DSM 12025 / NBRC 103806 / TLS) (Chlorobium tepidum)).